Consider the following 213-residue polypeptide: High frequency lysogenization protein HflD homolog (213 aa).

The stretch at 79–126 (QGLNAELTRYTLSLMVLERKLSSAKGALDTLGNRINGLQRQLEHFDLQ) forms a coiled coil.

It belongs to the HflD family.

It localises to the cytoplasm. The protein resides in the cell inner membrane. This chain is High frequency lysogenization protein HflD homolog, found in Shigella boydii serotype 18 (strain CDC 3083-94 / BS512).